The following is a 178-amino-acid chain: Dual-action ribosomal maturation protein DarP (178 aa).

The segment covering 1–14 has biased composition (polar residues); sequence MTVSDHPQTVSQPD. Residues 1 to 25 are disordered; sequence MTVSDHPQTVSQPDPESESRPSKTR.

The protein belongs to the DarP family.

It localises to the cytoplasm. In terms of biological role, member of a network of 50S ribosomal subunit biogenesis factors which assembles along the 30S-50S interface, preventing incorrect 23S rRNA structures from forming. Promotes peptidyl transferase center (PTC) maturation. In Nitrosomonas europaea (strain ATCC 19718 / CIP 103999 / KCTC 2705 / NBRC 14298), this protein is Dual-action ribosomal maturation protein DarP.